The following is a 267-amino-acid chain: Diphthine--ammonia ligase (267 aa).

Tyr-97 bears the Phosphotyrosine mark.

The protein belongs to the Diphthine--ammonia ligase family.

The enzyme catalyses diphthine-[translation elongation factor 2] + NH4(+) + ATP = diphthamide-[translation elongation factor 2] + AMP + diphosphate + H(+). Its pathway is protein modification; peptidyl-diphthamide biosynthesis. Its function is as follows. Amidase that catalyzes the last step of diphthamide biosynthesis using ammonium and ATP. Diphthamide biosynthesis consists in the conversion of an L-histidine residue in the translation elongation factor eEF-2 (EEF2) to diphthamide. The polypeptide is Diphthine--ammonia ligase (DPH6) (Bos taurus (Bovine)).